Reading from the N-terminus, the 373-residue chain is Alanine dehydrogenase (373 aa).

Residues Arg15 and Lys75 each coordinate substrate. The active-site Proton donor/acceptor is the His96. NAD(+)-binding positions include Ser134, 178-179 (IV), Asp198, Ser220, 239-240 (VL), 267-270 (VAID), Arg280, and 299-302 (VANI). The active-site Proton donor/acceptor is Asp270.

Belongs to the AlaDH/PNT family. In terms of assembly, homohexamer. Trimer of dimer.

The protein localises to the cytoplasm. The catalysed reaction is L-alanine + NAD(+) + H2O = pyruvate + NH4(+) + NADH + H(+). It participates in amino-acid degradation; L-alanine degradation via dehydrogenase pathway; NH(3) and pyruvate from L-alanine: step 1/1. Its function is as follows. Catalyzes the reversible reductive amination of pyruvate to L-alanine. This enzyme is a key factor in the assimilation of L-alanine as an energy source through the tricarboxylic acid cycle. The protein is Alanine dehydrogenase of Methanococcus maripaludis (strain DSM 14266 / JCM 13030 / NBRC 101832 / S2 / LL).